The sequence spans 785 residues: Potassium transporter 5 (785 aa).

At 1–60 the chain is on the cytoplasmic side; it reads MDGEEHQIDGDEVNNHENKLNEKKKSWGKLYRPDSFIIEAGQTPTNTGRRSLMSWRTTMS. A Phosphoserine modification is found at Ser-35. The helical transmembrane segment at 61–81 threads the bilayer; that stretch reads LAFQSLGVVYGDIGTSPLYVY. Residues 82 to 97 lie on the Extracellular side of the membrane; sequence ASTFTDGINDKDDVVG. The helical transmembrane segment at 98–118 threads the bilayer; the sequence is VLSLIIYTITLVALLKYVFIV. The Cytoplasmic segment spans residues 119 to 184; it reads LQANDNGEGG…EKLENSKFAK (66 aa). The helical transmembrane segment at 185–205 threads the bilayer; it reads IILFLVTIMGTSMVIGDGILT. Topologically, residues 206 to 218 are extracellular; it reads PSISVLSAVSGIK. A helical transmembrane segment spans residues 219 to 239; sequence SLGQNTVVGVSVAILIVLFAF. The Cytoplasmic segment spans residues 240–247; that stretch reads QRFGTDKV. A helical transmembrane segment spans residues 248–268; the sequence is GFSFAPIILVWFTFLIGIGLF. The Extracellular portion of the chain corresponds to 269–297; it reads NLFKHDITVLKALNPLYIIYYFRRTGRQG. Residues 298-318 traverse the membrane as a helical segment; sequence WISLGGVFLCITGTEAMFADL. Over 319 to 327 the chain is Cytoplasmic; the sequence is GHFSVRAVQ. The chain crosses the membrane as a helical span at residues 328–348; that stretch reads ISFSCVAYPALVTIYCGQAAY. Residues 349-367 are Extracellular-facing; sequence LTKHTYNVSNTFYDSIPDP. Residue Asn-355 is glycosylated (N-linked (GlcNAc...) asparagine). A helical transmembrane segment spans residues 368–388; sequence LYWPTFVVAVAASIIASQAMI. At 389–419 the chain is on the cytoplasmic side; sequence SGAFSVISQSLRMGCFPRVKVVHTSAKYEGQ. Residues 420 to 440 form a helical membrane-spanning segment; the sequence is VYIPEINYLLMLACIAVTLAF. Residues 441-451 are Extracellular-facing; sequence RTTEKIGHAYG. A helical membrane pass occupies residues 452–472; sequence IAVVTVMVITTLMVTLIMLVI. The Cytoplasmic segment spans residues 473 to 476; the sequence is WKTN. Residues 477 to 497 traverse the membrane as a helical segment; that stretch reads IVWIAIFLVVFGSIEMLYLSS. Topologically, residues 498–501 are extracellular; sequence VMYK. A helical membrane pass occupies residues 502 to 522; that stretch reads FTSGGYLPLTITVVLMAMMAI. Residues 523-785 lie on the Cytoplasmic side of the membrane; it reads WQYVHVLKYR…LLKVGMTYEL (263 aa). A disordered region spans residues 660-699; the sequence is GGEVDETDKEEEPNAETTVVPSSNYVPSSGRIGSAHSSSS. Residues 662 to 673 are compositionally biased toward acidic residues; it reads EVDETDKEEEPN. Polar residues predominate over residues 674–686; it reads AETTVVPSSNYVP. The segment covering 687–697 has biased composition (low complexity); it reads SSGRIGSAHSS.

It belongs to the HAK/KUP transporter (TC 2.A.72.3) family. As to quaternary structure, interacts with ILK1. Phosphorylated at the N-terminus (amino acids 1-95) by CIPK23. In terms of tissue distribution, predominantly expressed in the roots.

It localises to the cell membrane. In terms of biological role, high-affinity potassium transporter. Can also transport rubidium and cesium. Is essential with AKT1 for high-affinity potassium uptake in roots during seedling establishment and postgermination growth under low potassium conditions. Mediates potassium uptake by plant roots in response to low potassium conditions, by a calcium-, CBL-, and CIPK-dependent pathway. Positively regulated by the calcium sensors calcineurin B-like genes CBL1, CBL8, CBL9 and CBL10, and by phosphorylation by CIPK23. The polypeptide is Potassium transporter 5 (POT5) (Arabidopsis thaliana (Mouse-ear cress)).